A 722-amino-acid chain; its full sequence is PAB1-binding protein 1 (722 aa).

Basic and acidic residues predominate over residues 1–10 (MKGNFRKRDS). Residues 1–38 (MKGNFRKRDSSTNSRKGGNSDSNYTNGGVPNQNNSSMF) form a disordered region. Residues 11–38 (STNSRKGGNSDSNYTNGGVPNQNNSSMF) are compositionally biased toward polar residues. One can recognise a Sm domain in the interval 51–107 (RQDYLLANSIGSDVTVTVTSGVKYTGLLVSCNLESTNGIDVVLRFPRVADSGVSDSV). A Phosphoserine modification is found at serine 106. Threonine 193 carries the post-translational modification Phosphothreonine. Residue serine 215 is modified to Phosphoserine. 3 disordered regions span residues 305–380 (ALKS…LSSK), 412–488 (SSTL…NPHT), and 683–722 (GSGP…SGHK). Composition is skewed to low complexity over residues 307 to 316 (KSNSKPNSNK), 338 to 347 (SSSNSNKNEN), 356 to 370 (PAAA…PQKT), and 412 to 421 (SSTLKSNSSL). Lysine 344 is covalently cross-linked (Glycyl lysine isopeptide (Lys-Gly) (interchain with G-Cter in ubiquitin)). The span at 429–455 (TPSAKTVSPTTQISAGKSESRRSGSNI) shows a compositional bias: polar residues. Position 436 is a phosphoserine (serine 436). Low complexity predominate over residues 456–471 (SQGQSSTGHTTRSSTS). Over residues 698–722 (SHGHSRNYHQTSHHGHHNSSTSGHK) the composition is skewed to basic residues.

Belongs to the ataxin-2 family. As to quaternary structure, interacts (via C-terminus) with MKT1 (via C-terminus). Interacts with FIR1, IGO1, LSM12, PBP4 and PAB1.

The protein resides in the cytoplasm. Its subcellular location is the nucleus. It localises to the mitochondrion. Its function is as follows. Involved in pre-mRNA polyadenylation. May act to repress the ability of PAB1 to negatively regulate polyadenylation. Negative regulator of poly(A) nuclease (PAN) activity. Promotes mating-type switching in mother cells by positively regulating HO mRNA translation. Localizes MKT1 to polysomes. This is PAB1-binding protein 1 (PBP1) from Saccharomyces cerevisiae (strain ATCC 204508 / S288c) (Baker's yeast).